Here is a 154-residue protein sequence, read N- to C-terminus: MGKISSLPTQLFKCCFCDFLKQVKMPITSSSHLFYLALCLLAFTSSATAGPETLCGAELVDALQFVCGDRGFYFNKPTGYGSSSRRAPQTGIVDECCFRSCDLRRLEMYCAPLKPAKSARSVRAQRHTDMPKAQKEVHLKNTSRGSAGNKNYRM.

A b region spans residues 50-78; the sequence is GPETLCGAELVDALQFVCGDRGFYFNKPT. Intrachain disulfides connect Cys-55/Cys-97, Cys-67/Cys-110, and Cys-96/Cys-101. The interval 79–90 is c; it reads GYGSSSRRAPQT. The interval 91 to 111 is a; that stretch reads GIVDECCFRSCDLRRLEMYCA. The segment at 112 to 119 is d; that stretch reads PLKPAKSA. Positions 120 to 154 are cleaved as a propeptide — e peptide; that stretch reads RSVRAQRHTDMPKAQKEVHLKNTSRGSAGNKNYRM. The segment at 121–154 is disordered; the sequence is SVRAQRHTDMPKAQKEVHLKNTSRGSAGNKNYRM. The span at 126–139 shows a compositional bias: basic and acidic residues; that stretch reads RHTDMPKAQKEVHL. Polar residues predominate over residues 140-154; sequence KNTSRGSAGNKNYRM.

Belongs to the insulin family. In terms of assembly, forms a ternary complex with IGFR1 and ITGAV:ITGB3. Forms a ternary complex with IGFR1 and ITGA6:ITGB4. Forms a ternary complex with IGFBP3 and ALS.

It localises to the secreted. Functionally, the insulin-like growth factors, isolated from plasma, are structurally and functionally related to insulin but have a much higher growth-promoting activity. May be a physiological regulator of [1-14C]-2-deoxy-D-glucose (2DG) transport and glycogen synthesis in osteoblasts. Stimulates glucose transport in bone-derived osteoblastic (PyMS) cells and is effective at much lower concentrations than insulin, not only regarding glycogen and DNA synthesis but also with regard to enhancing glucose uptake. May play a role in synapse maturation. Ca(2+)-dependent exocytosis of IGF1 is required for sensory perception of smell in the olfactory bulb. Acts as a ligand for IGF1R. Binds to the alpha subunit of IGF1R, leading to the activation of the intrinsic tyrosine kinase activity which autophosphorylates tyrosine residues in the beta subunit thus initiating a cascade of down-stream signaling events leading to activation of the PI3K-AKT/PKB and the Ras-MAPK pathways. Binds to integrins ITGAV:ITGB3 and ITGA6:ITGB4. Its binding to integrins and subsequent ternary complex formation with integrins and IGFR1 are essential for IGF1 signaling. Induces the phosphorylation and activation of IGFR1, MAPK3/ERK1, MAPK1/ERK2 and AKT1. As part of the MAPK/ERK signaling pathway, acts as a negative regulator of apoptosis in cardiomyocytes via promotion of STUB1/CHIP-mediated ubiquitination and degradation of ICER-type isoforms of CREM. This is Insulin-like growth factor 1 from Bos taurus (Bovine).